The primary structure comprises 975 residues: Protein HIRA (975 aa).

WD repeat units follow at residues 10 to 50 (RHEG…KDND), 64 to 103 (DHFGTVNCVRWAHHGRYLASGSDDQVIQIHERKAGTGTSE), 123 to 162 (GHTADVVDLNWSPDDSTLASGSLDNTVHIWSMANGICTAV), 165 to 204 (GHSSLVKGVTWDPIGSFIASQSDDKTVIIWRTSDWSLAHR), 214 to 256 (GSTF…ATFD), 259 to 331 (GHNA…PLFV), and 335 to 374 (FFTQSVVDLSWSPDGYSLFACSLDGSVATFHFEAKELGYR). Residues 418 to 433 (KKVSSVQQFQSPPKVS) show a composition bias toward low complexity. Disordered stretches follow at residues 418–510 (KKVS…RSQN) and 948–975 (NVEQMDVTPTPPPPPPAAATEGNNNGAS). A compositionally biased stretch (polar residues) spans 435–445 (DAPNPSTSVPN). The segment covering 478 to 492 (KQREYRRPDGRKRII) has biased composition (basic and acidic residues). A compositionally biased stretch (polar residues) spans 499-510 (PSNQDMSNRSQN). Positions 923 to 954 (ATNRKVQRLLNEFMDLLSEYEAAETNVEQMDV) form a coiled coil.

It belongs to the WD repeat HIR1 family.

Its subcellular location is the nucleus. In terms of biological role, histone chaperone involved in maintining knox genes silencing throughout leaf development. The chain is Protein HIRA from Oryza sativa subsp. japonica (Rice).